We begin with the raw amino-acid sequence, 679 residues long: Single-strand DNA endonuclease ASTE1 (679 aa).

The interaction with SHLD2 stretch occupies residues 351–400 (TILPTQVENMQQPNAHRISQPIRQIIYGLLLNASPHLDKTSWNALPPQPL). The tract at residues 625–645 (RSNSKKKRQKKQNTSCSKNRG) is disordered. Basic residues predominate over residues 626–635 (SNSKKKRQKK).

Belongs to the asteroid family. Interacts with SHLD1, SHLD2, SHLD3, RIF1 and MAD2L2/REV7.

Functionally, structure-specific DNA endonuclease that specifically cleaves single-stranded DNA and 3' overhang DNA. Contributes to the control of DNA double-strand break repair choice by antagonizing BRCA1-dependent homologous recombination (HR) and promoting non-homologous end-joining (NHEJ). Recruited to the single-stranded DNA ends by SHLD2 and cleaves the 3' exposed DNA ends, therefore inhibiting DNA end resection (necessary for HR) and promoting DNA end protection (necessary for NHEJ). The polypeptide is Single-strand DNA endonuclease ASTE1 (ASTE1) (Homo sapiens (Human)).